Reading from the N-terminus, the 209-residue chain is Small ribosomal subunit protein uS4 (209 aa).

Residues Arg22 to Ser45 are disordered. Residues Cys93–Glu154 enclose the S4 RNA-binding domain.

This sequence belongs to the universal ribosomal protein uS4 family. In terms of assembly, part of the 30S ribosomal subunit. Contacts protein S5. The interaction surface between S4 and S5 is involved in control of translational fidelity.

Its function is as follows. One of the primary rRNA binding proteins, it binds directly to 16S rRNA where it nucleates assembly of the body of the 30S subunit. With S5 and S12 plays an important role in translational accuracy. The sequence is that of Small ribosomal subunit protein uS4 from Chlamydia trachomatis serovar L2 (strain ATCC VR-902B / DSM 19102 / 434/Bu).